A 201-amino-acid chain; its full sequence is 3-isopropylmalate dehydratase small subunit (201 aa).

Belongs to the LeuD family. LeuD type 1 subfamily. As to quaternary structure, heterodimer of LeuC and LeuD.

It catalyses the reaction (2R,3S)-3-isopropylmalate = (2S)-2-isopropylmalate. It functions in the pathway amino-acid biosynthesis; L-leucine biosynthesis; L-leucine from 3-methyl-2-oxobutanoate: step 2/4. Functionally, catalyzes the isomerization between 2-isopropylmalate and 3-isopropylmalate, via the formation of 2-isopropylmaleate. This chain is 3-isopropylmalate dehydratase small subunit, found in Shewanella halifaxensis (strain HAW-EB4).